The following is a 122-amino-acid chain: UPF0102 protein ECH_0093 (122 aa).

This sequence belongs to the UPF0102 family.

In Ehrlichia chaffeensis (strain ATCC CRL-10679 / Arkansas), this protein is UPF0102 protein ECH_0093.